The chain runs to 37 residues: Large ribosomal subunit protein bL36 (37 aa).

Belongs to the bacterial ribosomal protein bL36 family.

The sequence is that of Large ribosomal subunit protein bL36 from Thermomicrobium roseum (strain ATCC 27502 / DSM 5159 / P-2).